The following is a 310-amino-acid chain: 4-hydroxy-3-methylbut-2-enyl diphosphate reductase (310 aa).

Cysteine 13 lines the [4Fe-4S] cluster pocket. Positions 42 and 75 each coordinate (2E)-4-hydroxy-3-methylbut-2-enyl diphosphate. Residues histidine 42 and histidine 75 each coordinate dimethylallyl diphosphate. Residues histidine 42 and histidine 75 each coordinate isopentenyl diphosphate. Cysteine 97 contributes to the [4Fe-4S] cluster binding site. Histidine 125 is a (2E)-4-hydroxy-3-methylbut-2-enyl diphosphate binding site. Histidine 125 contacts dimethylallyl diphosphate. Position 125 (histidine 125) interacts with isopentenyl diphosphate. Glutamate 127 (proton donor) is an active-site residue. A (2E)-4-hydroxy-3-methylbut-2-enyl diphosphate-binding site is contributed by threonine 165. Cysteine 195 contributes to the [4Fe-4S] cluster binding site. 4 residues coordinate (2E)-4-hydroxy-3-methylbut-2-enyl diphosphate: serine 223, serine 224, asparagine 225, and serine 267. Positions 223, 224, 225, and 267 each coordinate dimethylallyl diphosphate. Isopentenyl diphosphate contacts are provided by serine 223, serine 224, asparagine 225, and serine 267.

Belongs to the IspH family. [4Fe-4S] cluster serves as cofactor.

It carries out the reaction isopentenyl diphosphate + 2 oxidized [2Fe-2S]-[ferredoxin] + H2O = (2E)-4-hydroxy-3-methylbut-2-enyl diphosphate + 2 reduced [2Fe-2S]-[ferredoxin] + 2 H(+). It catalyses the reaction dimethylallyl diphosphate + 2 oxidized [2Fe-2S]-[ferredoxin] + H2O = (2E)-4-hydroxy-3-methylbut-2-enyl diphosphate + 2 reduced [2Fe-2S]-[ferredoxin] + 2 H(+). It participates in isoprenoid biosynthesis; dimethylallyl diphosphate biosynthesis; dimethylallyl diphosphate from (2E)-4-hydroxy-3-methylbutenyl diphosphate: step 1/1. Its pathway is isoprenoid biosynthesis; isopentenyl diphosphate biosynthesis via DXP pathway; isopentenyl diphosphate from 1-deoxy-D-xylulose 5-phosphate: step 6/6. Catalyzes the conversion of 1-hydroxy-2-methyl-2-(E)-butenyl 4-diphosphate (HMBPP) into a mixture of isopentenyl diphosphate (IPP) and dimethylallyl diphosphate (DMAPP). Acts in the terminal step of the DOXP/MEP pathway for isoprenoid precursor biosynthesis. The sequence is that of 4-hydroxy-3-methylbut-2-enyl diphosphate reductase from Chlamydia pneumoniae (Chlamydophila pneumoniae).